The chain runs to 371 residues: Opsin Rh1 (371 aa).

The Extracellular segment spans residues 1–47 (MERYSTPLIGPSFAALTNGSVTDKVTPDMAHLVHPYWNQFPAMEPKW). A glycan (N-linked (GlcNAc...) asparagine) is linked at asparagine 18. Residues 48 to 72 (AKFLAAYMVLIATISWCGNGVVIYI) form a helical membrane-spanning segment. The Cytoplasmic segment spans residues 73–84 (FSTTKSLRTPAN). Residues 85–110 (LLVINLAISDFGIMITNTPMMGINLF) traverse the membrane as a helical segment. The Extracellular portion of the chain corresponds to 111-124 (YETWVLGPLMCDIY). Cysteine 121 and cysteine 198 are disulfide-bonded. Residues 125-144 (GGLGSAFGCSSILSMCMISL) form a helical membrane-spanning segment. Over 145-163 (DRYNVIVKGMAGQPMTIKL) the chain is Cytoplasmic. A helical transmembrane segment spans residues 164-187 (AIMKIALIWFMASIWTLAPVFGWS). Residues 188–211 (RYVPEGNLTSCGIDYLERDWNPRS) lie on the Extracellular side of the membrane. The helical transmembrane segment at 212–239 (YLIFYSIFVYYLPLFLICYSYWFIIAAV) threads the bilayer. The Cytoplasmic segment spans residues 240-274 (SAHEKAMREQAKKMNVKSLRSSEDADKSAEGKLAK). Residues 275 to 298 (VALVTISLWFMAWTPYTIINTLGL) form a helical membrane-spanning segment. Residues 299-305 (FKYEGLT) are Extracellular-facing. Residues 306 to 330 (PLNTIWGACFAKSAACYNPIVYGIS) form a helical membrane-spanning segment. Position 317 is an N6-(retinylidene)lysine (lysine 317). At 331-371 (HPKYGIALKEKCPCCVFGKVDDGKASDATSQATNNESETKA) the chain is on the cytoplasmic side.

Belongs to the G-protein coupled receptor 1 family. Opsin subfamily. Post-translationally, phosphorylated on some or all of the serine and threonine residues present in the C-terminal region.

It localises to the cell projection. Its subcellular location is the rhabdomere membrane. Functionally, visual pigments are the light-absorbing molecules that mediate vision. They consist of an apoprotein, opsin, covalently linked to cis-retinal. In Calliphora vicina (Blue blowfly), this protein is Opsin Rh1 (NINAE).